We begin with the raw amino-acid sequence, 156 residues long: MGRFIFVRFGLLVVFLSLSGTGADFDCPPDWSAYDQHCYKAFDEPKRSGDAEKFCTQQANGGHLVSIESVEEAEFVAQLISENIKTSADYVWIGLWNQRKAPYCVSKWTDGSSVIYKNVIERFIKNCFGLEKETNYRTWFNLSCGDDYPFVCKSPA.

Residues 1–23 (MGRFIFVRFGLLVVFLSLSGTGA) form the signal peptide. Cystine bridges form between Cys-27-Cys-38, Cys-55-Cys-152, and Cys-127-Cys-144. In terms of domain architecture, C-type lectin spans 34–153 (YDQHCYKAFD…CGDDYPFVCK (120 aa)). The N-linked (GlcNAc...) asparagine glycan is linked to Asn-141.

It belongs to the snaclec family. As to quaternary structure, heterodimer; disulfide-linked. In terms of tissue distribution, expressed by the venom gland.

The protein localises to the secreted. Its function is as follows. Interferes with one step of hemostasis (modulation of platelet aggregation, or coagulation cascade, for example). The protein is Snaclec A15 of Macrovipera lebetinus (Levantine viper).